The sequence spans 342 residues: MQYAVVFGGKSYEHEISIVSTIAIKDIIPGAIFIFLDGNRDFYLIEKADLKSNYFSSGNYKKSPKLELKKGGFYQKSLLKEKKIPADVVINLVHGADGEDGKLASLLEFFEIDYIGPRIEGSVISYSKLLTKLYAKECGIEVLPYQLLRKQDKKIIDFEYPVIIKPNHLGSSIGVSVVYDSSELEYALDVAFEFDDEVLIEPFIEGIEEYNLAGAKGQTFHFSKIEAVKKEKLLDFEKKYLDFGRSGEVKDASLNETLRLHIRNAFEKIYDPLFSGAIIRIDFFVRDGKLYLNEINPVPGSLANYLFGDFRAVLEDVAKHLPKSKNIVIDYRYINSIQSAKK.

The ATP-grasp domain occupies 132–326 (KLYAKECGIE…VAKHLPKSKN (195 aa)). Residue 159–210 (EYPVIIKPNHLGSSIGVSVVYDSSELEYALDVAFEFDDEVLIEPFIEGIEEY) coordinates ATP. Residues Asp282, Glu294, and Asn296 each coordinate Mg(2+).

Belongs to the D-alanine--D-alanine ligase family. Requires Mg(2+) as cofactor. Mn(2+) serves as cofactor.

It localises to the cytoplasm. It carries out the reaction 2 D-alanine + ATP = D-alanyl-D-alanine + ADP + phosphate + H(+). It functions in the pathway cell wall biogenesis; peptidoglycan biosynthesis. In terms of biological role, cell wall formation. This is D-alanine--D-alanine ligase from Nitratiruptor sp. (strain SB155-2).